The primary structure comprises 960 residues: MLFLRPGPARGRGRGRPARAPHSGLSPPWSPAWICCWALAGCQAAWAGAGDLPSTSGRPLPPCLEKDYHFEYTECDSSGSRWRVAIPNSAVDCSGLPDPVRGKECTFSCASGEYLEMKNQVCSKCGEGTYSLGSGIKFDEWDELPAGFSNVATFMDTVVGPSDSRPEGCNNSSWVPRGNYIESNRDDCTVSLIYAVHLKKSGYVFFEYQYVDNNIFFEFFIQNDQCQEMDTTADKWVKLTDNGEWGSHSVMLKSGTNILYWRTTGILMGSKAVKPVLVKNITIEGVAYTSECFPCKPGTFSDKPGSFICQVCPRNTYSEKGAKECIRCDEDSQFSEEGSSECMERPPCTSKDYFQIHTPCDEEGKTQIMYKWIEPKICREDLTDAIRLPPSGEKKDCPPCNPGFYNNGSSSCHPCPPGTFSDGTKECRSCPAGTEPALGFEYKWWNVLPGNMKTSCFNVGNSKCDGMNGWEVAGDHIQSGAGGSDNDYLILNLHIPGFKPPTSMTGAMGSELGRITFVFETLCSADCVLYFMVDINRKSTNVVESWGGTKEKQAYTHVIFKNATFTFTWAFQRTNQGQDATTLRKKPTSAWSVHLIPTCPYIRSMARRLVFHVGLGVEALSNLSSVGSLMNGPSFTSKGTKYFHFFNISLCGHEGKKLAVCTNNITDFTVKEMVAGSDDYTNLVGAFVCQSTIIPSESKGFRAALSSQSIILADTFLGVTVETTLQNINIKEDMFPVSPSQIPDVHFFYKSSTTTTSCVNGRSTAVKMRCNPAKPGAGAISVPSKCPAGTCDGCTFYFLWESVEACPLCTEHDFHEIEGACKRGFQETLYVWNEPKWCIKGISLPEKKLSTCETVDFWLKVGAGVGAFTAVLLVALTCYFWKKNQKLEYKYSKLVMTTNSKECELPAADSCAIMEGEDNEEEVVYSNKQSLLGKLKSLATKEKEDHFESVQLKSSRSPNI.

The interval 1–26 (MLFLRPGPARGRGRGRPARAPHSGLS) is disordered. The signal sequence occupies residues 1-44 (MLFLRPGPARGRGRGRPARAPHSGLSPPWSPAWICCWALAGCQA). Over 45–860 (AWAGAGDLPS…TCETVDFWLK (816 aa)) the chain is Extracellular. Asn171 carries N-linked (GlcNAc...) asparagine glycosylation. 3 cysteine pairs are disulfide-bonded: Cys295–Cys312, Cys325–Cys348, and Cys328–Cys360. N-linked (GlcNAc...) asparagine glycosylation is found at Asn407 and Asn622. An MRH domain is found at 597–808 (PTCPYIRSMA…LWESVEACPL (212 aa)). Disulfide bonds link Cys599/Cys651, Cys661/Cys689, Cys758/Cys794, and Cys770/Cys806. Residues 861 to 881 (VGAGVGAFTAVLLVALTCYFW) traverse the membrane as a helical segment. Over 882 to 960 (KKNQKLEYKY…QLKSSRSPNI (79 aa)) the chain is Cytoplasmic. Ser949 carries the post-translational modification Phosphoserine.

This sequence belongs to the ELAPOR family.

It localises to the cell membrane. Its function is as follows. Functions as a regulator of the BMP signaling pathway and may be involved in epidermal differentiation. The sequence is that of Endosome/lysosome-associated apoptosis and autophagy regulator family member 2 from Bos taurus (Bovine).